The sequence spans 147 residues: Myosin-2 essential light chain (147 aa).

3 EF-hand domains span residues 7-42, 80-115, and 115-147; these read DQLA…LGQN, DTAD…LGEK, and KLTD…VMSG. Residue S30 is modified to Phosphoserine. Ca(2+) is bound by residues D93, D95, S97, Y99, and E104.

As to quaternary structure, myosin is a hexamer of 2 heavy chains and 4 light chains.

This Drosophila melanogaster (Fruit fly) protein is Myosin-2 essential light chain (Mlc-c).